Reading from the N-terminus, the 340-residue chain is Anthranilate phosphoribosyltransferase (340 aa).

Residues glycine 78, 81-82 (GD), threonine 86, 88-91 (NIST), 106-114 (KHGNRSVSS), and serine 118 each bind 5-phospho-alpha-D-ribose 1-diphosphate. Anthranilate is bound at residue glycine 78. Serine 90 serves as a coordination point for Mg(2+). An anthranilate-binding site is contributed by asparagine 109. Residue arginine 164 participates in anthranilate binding. The Mg(2+) site is built by aspartate 223 and glutamate 224.

Belongs to the anthranilate phosphoribosyltransferase family. As to quaternary structure, homodimer. It depends on Mg(2+) as a cofactor.

It carries out the reaction N-(5-phospho-beta-D-ribosyl)anthranilate + diphosphate = 5-phospho-alpha-D-ribose 1-diphosphate + anthranilate. Its pathway is amino-acid biosynthesis; L-tryptophan biosynthesis; L-tryptophan from chorismate: step 2/5. Catalyzes the transfer of the phosphoribosyl group of 5-phosphorylribose-1-pyrophosphate (PRPP) to anthranilate to yield N-(5'-phosphoribosyl)-anthranilate (PRA). The protein is Anthranilate phosphoribosyltransferase of Bacillus pumilus (Bacillus mesentericus).